The primary structure comprises 189 residues: Adenylate kinase (189 aa).

ATP is bound at residue 11-16; the sequence is GSGKGT. The tract at residues 31–60 is NMP; it reads STGDVLRAEIKNGTELGKTAKGYIDQGQLI. AMP contacts are provided by residues T32, R37, 58–60, 86–89, and Q93; these read QLI and GFPR. An LID region spans residues 127–137; it reads KRGKESGRADD. Residue R128 coordinates ATP. The AMP site is built by R134 and R145. G173 contacts ATP.

It belongs to the adenylate kinase family. In terms of assembly, monomer.

It is found in the cytoplasm. The catalysed reaction is AMP + ATP = 2 ADP. Its pathway is purine metabolism; AMP biosynthesis via salvage pathway; AMP from ADP: step 1/1. Its function is as follows. Catalyzes the reversible transfer of the terminal phosphate group between ATP and AMP. Plays an important role in cellular energy homeostasis and in adenine nucleotide metabolism. In Bacteroides fragilis (strain ATCC 25285 / DSM 2151 / CCUG 4856 / JCM 11019 / LMG 10263 / NCTC 9343 / Onslow / VPI 2553 / EN-2), this protein is Adenylate kinase.